The primary structure comprises 102 residues: NADH-quinone oxidoreductase subunit K (102 aa).

Helical transmembrane passes span 5 to 25 (IAHY…GIFL), 31 to 51 (IIIL…FIAF), and 66 to 86 (FVLT…VVFF).

The protein belongs to the complex I subunit 4L family. NDH-1 is composed of 14 different subunits. Subunits NuoA, H, J, K, L, M, N constitute the membrane sector of the complex.

The protein resides in the cell inner membrane. The enzyme catalyses a quinone + NADH + 5 H(+)(in) = a quinol + NAD(+) + 4 H(+)(out). NDH-1 shuttles electrons from NADH, via FMN and iron-sulfur (Fe-S) centers, to quinones in the respiratory chain. The immediate electron acceptor for the enzyme in this species is believed to be ubiquinone. Couples the redox reaction to proton translocation (for every two electrons transferred, four hydrogen ions are translocated across the cytoplasmic membrane), and thus conserves the redox energy in a proton gradient. This Chelativorans sp. (strain BNC1) protein is NADH-quinone oxidoreductase subunit K.